The following is a 304-amino-acid chain: tRNA pseudouridine synthase B (304 aa).

Asp-38 (nucleophile) is an active-site residue.

It belongs to the pseudouridine synthase TruB family. Type 1 subfamily.

It catalyses the reaction uridine(55) in tRNA = pseudouridine(55) in tRNA. Responsible for synthesis of pseudouridine from uracil-55 in the psi GC loop of transfer RNAs. The sequence is that of tRNA pseudouridine synthase B from Listeria innocua serovar 6a (strain ATCC BAA-680 / CLIP 11262).